The following is a 176-amino-acid chain: Glutathione-regulated potassium-efflux system ancillary protein KefF (176 aa).

FMN is bound by residues H8, 14 to 17 (SHAN), 65 to 68 (MQWY), and 105 to 108 (TTGG).

Belongs to the NAD(P)H dehydrogenase (quinone) family. KefF subfamily. In terms of assembly, homodimer. Interacts with KefC. FMN is required as a cofactor.

The protein resides in the cell inner membrane. It catalyses the reaction a quinone + NADH + H(+) = a quinol + NAD(+). The enzyme catalyses a quinone + NADPH + H(+) = a quinol + NADP(+). In terms of biological role, regulatory subunit of a potassium efflux system that confers protection against electrophiles. Required for full activity of KefC. Shows redox enzymatic activity, but this enzymatic activity is not required for activation of KefC. In Salmonella gallinarum (strain 287/91 / NCTC 13346), this protein is Glutathione-regulated potassium-efflux system ancillary protein KefF.